The primary structure comprises 451 residues: Phosphoglucosamine mutase (451 aa).

Serine 103 serves as the catalytic Phosphoserine intermediate. Mg(2+)-binding residues include serine 103, aspartate 243, aspartate 245, and aspartate 247. At serine 103 the chain carries Phosphoserine.

The protein belongs to the phosphohexose mutase family. Mg(2+) is required as a cofactor. In terms of processing, activated by phosphorylation.

The enzyme catalyses alpha-D-glucosamine 1-phosphate = D-glucosamine 6-phosphate. Catalyzes the conversion of glucosamine-6-phosphate to glucosamine-1-phosphate. This chain is Phosphoglucosamine mutase, found in Limosilactobacillus reuteri subsp. reuteri (strain JCM 1112) (Lactobacillus reuteri).